The chain runs to 207 residues: Large ribosomal subunit protein uL4 (207 aa).

The disordered stretch occupies residues 44–81 (KRQGTQSAKTRSEVRGGGRKPWRQKGTGRARQGSIRSP). The span at 60-71 (GGRKPWRQKGTG) shows a compositional bias: basic residues.

It belongs to the universal ribosomal protein uL4 family. In terms of assembly, part of the 50S ribosomal subunit.

Its function is as follows. One of the primary rRNA binding proteins, this protein initially binds near the 5'-end of the 23S rRNA. It is important during the early stages of 50S assembly. It makes multiple contacts with different domains of the 23S rRNA in the assembled 50S subunit and ribosome. In terms of biological role, forms part of the polypeptide exit tunnel. The chain is Large ribosomal subunit protein uL4 from Finegoldia magna (strain ATCC 29328 / DSM 20472 / WAL 2508) (Peptostreptococcus magnus).